Consider the following 355-residue polypeptide: Nicotinate-nucleotide--dimethylbenzimidazole phosphoribosyltransferase (355 aa).

E321 functions as the Proton acceptor in the catalytic mechanism.

The protein belongs to the CobT family.

The enzyme catalyses 5,6-dimethylbenzimidazole + nicotinate beta-D-ribonucleotide = alpha-ribazole 5'-phosphate + nicotinate + H(+). It functions in the pathway nucleoside biosynthesis; alpha-ribazole biosynthesis; alpha-ribazole from 5,6-dimethylbenzimidazole: step 1/2. Its function is as follows. Catalyzes the synthesis of alpha-ribazole-5'-phosphate from nicotinate mononucleotide (NAMN) and 5,6-dimethylbenzimidazole (DMB). This Desulfotalea psychrophila (strain LSv54 / DSM 12343) protein is Nicotinate-nucleotide--dimethylbenzimidazole phosphoribosyltransferase.